The sequence spans 252 residues: ATP synthase subunit a (252 aa).

Transmembrane regions (helical) follow at residues 29–49 (FTNV…FLFI), 87–107 (FFPL…IGLF), 117–137 (IMIT…YGFY), 146–166 (LFVP…IEVI), 196–216 (FIVS…LPLI), and 219–239 (VAIT…FTVL).

Belongs to the ATPase A chain family. In terms of assembly, F-type ATPases have 2 components, CF(1) - the catalytic core - and CF(0) - the membrane proton channel. CF(1) has five subunits: alpha(3), beta(3), gamma(1), delta(1), epsilon(1). CF(0) has three main subunits: a(1), b(2) and c(9-12). The alpha and beta chains form an alternating ring which encloses part of the gamma chain. CF(1) is attached to CF(0) by a central stalk formed by the gamma and epsilon chains, while a peripheral stalk is formed by the delta and b chains.

Its subcellular location is the cell inner membrane. In terms of biological role, key component of the proton channel; it plays a direct role in the translocation of protons across the membrane. The polypeptide is ATP synthase subunit a (Bartonella henselae (strain ATCC 49882 / DSM 28221 / CCUG 30454 / Houston 1) (Rochalimaea henselae)).